The primary structure comprises 165 residues: Protein-export protein SecB (165 aa).

This sequence belongs to the SecB family. In terms of assembly, homotetramer, a dimer of dimers. One homotetramer interacts with 1 SecA dimer.

The protein localises to the cytoplasm. Its function is as follows. One of the proteins required for the normal export of preproteins out of the cell cytoplasm. It is a molecular chaperone that binds to a subset of precursor proteins, maintaining them in a translocation-competent state. It also specifically binds to its receptor SecA. The sequence is that of Protein-export protein SecB from Colwellia psychrerythraea (strain 34H / ATCC BAA-681) (Vibrio psychroerythus).